We begin with the raw amino-acid sequence, 591 residues long: MTAEPEVRTLREVVLDQLGTAESRAYKMWLPPLTNPVPLNELIARDRRQPLRFALGIMDEPRRHLQDVWGVDVSGAGGNIGIGGAPQTGKSTLLQTMVMSAAATHSPRNVQFYCIDLGGGGLIYLENLPHVGGVANRSEPDKVNRVVAEMQAVMRQRETTFKEHRVGSIGMYRQLRDDPSQPVASDPYGDVFLIIDGWPGFVGEFPDLEGQVQDLAAQGLAFGVHVIISTPRWTELKSRVRDYLGTKIEFRLGDVNETQIDRITREIPANRPGRAVSMEKHHLMIGVPRFDGVHSADNLVEAITAGVTQIASQHTEQAPPVRVLPERIHLHELDPNPPGPESDYRTRWEIPIGLRETDLTPAHCHMHTNPHLLIFGAAKSGKTTIAHAIARAICARNSPQQVRFMLADYRSGLLDAVPDTHLLGAGAINRNSASLDEAVQALAVNLKKRLPPTDLTTAQLRSRSWWSGFDVVLLVDDWHMIVGAAGGMPPMAPLAPLLPAAADIGLHIIVTCQMSQAYKATMDKFVGAAFGSGAPTMFLSGEKQEFPSSEFKVKRRPPGQAFLVSPDGKEVIQAPYIEPPEEVFAAPPSAG.

FtsK domains are found at residues 65 to 259 (LQDV…NETQ) and 359 to 545 (LTPA…EKQE). ATP-binding positions include 84 to 91 (GAPQTGKS) and 376 to 383 (GAAKSGKT).

As to quaternary structure, part of the ESX-1 / type VII secretion system (T7SS), which is composed of cytosolic and membrane components. The ESX-1 membrane complex is composed of EccB1, EccCa1, EccCb1, EccD1 and EccE1. Interacts with EccCa1, EspK and the C-terminus of EsxB. Residues 1-261 interact with EsxB and an artificial EsxB-EsxA heterodimer.

The protein localises to the cytoplasm. EsxB binding to the second FtsK domain of EccCb1 causes multimerization; a subsequent unknown step relieves the allosteric inhibition of linker 2 on FtsK domain 1 (in EccCa1 subunit), activating the ATPase activity. Part of the ESX-1 specialized secretion system, which delivers several virulence factors to host cells during infection, including the key virulence factors EsxA (ESAT-6) and EsxB (CFP-10). EccCb1 may link the cytosolic components of the system with the membrane components. The chain is ESX-1 secretion system protein EccCb1 from Mycobacterium tuberculosis (strain ATCC 25618 / H37Rv).